A 424-amino-acid polypeptide reads, in one-letter code: Glutamate-1-semialdehyde 2,1-aminomutase (424 aa).

Lys260 carries the N6-(pyridoxal phosphate)lysine modification.

This sequence belongs to the class-III pyridoxal-phosphate-dependent aminotransferase family. HemL subfamily. Requires pyridoxal 5'-phosphate as cofactor.

Its subcellular location is the cytoplasm. The catalysed reaction is (S)-4-amino-5-oxopentanoate = 5-aminolevulinate. Its pathway is porphyrin-containing compound metabolism; protoporphyrin-IX biosynthesis; 5-aminolevulinate from L-glutamyl-tRNA(Glu): step 2/2. The protein is Glutamate-1-semialdehyde 2,1-aminomutase of Nitrosopumilus maritimus (strain SCM1).